We begin with the raw amino-acid sequence, 242 residues long: DnaJ homolog subfamily B member 3 (242 aa).

In terms of domain architecture, J spans 1-69 (MVDYYEVLGV…RKREVYDRCG (69 aa)).

In terms of tissue distribution, testis specific. Expression is confined to the germline without any contribution of the somatic components.

In terms of biological role, may operate as a co-chaperone of the male germ cell- and haploid stage-specific Hsp70 proteins. In Mus musculus (Mouse), this protein is DnaJ homolog subfamily B member 3 (Dnajb3).